Reading from the N-terminus, the 85-residue chain is Large ribosomal subunit protein bL27 (85 aa).

Belongs to the bacterial ribosomal protein bL27 family.

The chain is Large ribosomal subunit protein bL27 from Pseudomonas fluorescens (strain SBW25).